A 154-amino-acid chain; its full sequence is Protein X (154 aa).

The segment at 68–117 (PCALRFTSARCMETTVNAPRNLPTVLHKRTLGLSAMSTTKIETYFKDCVF) is mitochondrial targeting sequence.

It belongs to the orthohepadnavirus protein X family. In terms of assembly, may form homodimer. May interact with host CEBPA, CFLAR, CREB1, DDB1, E4F1, HBXIP, HSPD1/HSP60, NFKBIA, POLR2E and SMAD4. Interacts with host SMC5-SMC6 complex and induces its degradation. Interacts with host TRPC4AP; leading to prevent ubiquitination of TRPC4AP. Interacts with host PLSCR1; this interaction promotes ubiquitination and degradation of HBx and impairs HBx-mediated cell proliferation. In terms of processing, a fraction may be phosphorylated in insect cells and HepG2 cells, a human hepatoblastoma cell line. Phosphorylated in vitro by host protein kinase C or mitogen-activated protein kinase. N-acetylated in insect cells.

The protein localises to the host cytoplasm. It localises to the host nucleus. It is found in the host mitochondrion. Multifunctional protein that plays a role in silencing host antiviral defenses and promoting viral transcription. Does not seem to be essential for HBV infection. May be directly involved in development of cirrhosis and liver cancer (hepatocellular carcinoma). Most of cytosolic activities involve modulation of cytosolic calcium. The effect on apoptosis is controversial depending on the cell types in which the studies have been conducted. May induce apoptosis by localizing in mitochondria and causing loss of mitochondrial membrane potential. May also modulate apoptosis by binding host CFLAR, a key regulator of the death-inducing signaling complex (DISC). Promotes viral transcription by using the host E3 ubiquitin ligase DDB1 to target the SMC5-SMC6 complex to proteasomal degradation. This host complex would otherwise bind to viral episomal DNA, and prevents its transcription. Moderately stimulates transcription of many different viral and cellular transcription elements. Promoters and enhancers stimulated by HBx contain DNA binding sites for NF-kappa-B, AP-1, AP-2, c-EBP, ATF/CREB, or the calcium-activated factor NF-AT. In Gorilla gorilla (western gorilla), this protein is Protein X.